Consider the following 232-residue polypeptide: Ribose-5-phosphate isomerase A (232 aa).

Residues Thr28–Thr31, Asp83–Asp86, and Lys96–Gly99 contribute to the substrate site. Residue Glu105 is the Proton acceptor of the active site. Lys123 provides a ligand contact to substrate.

This sequence belongs to the ribose 5-phosphate isomerase family. In terms of assembly, homodimer.

It catalyses the reaction aldehydo-D-ribose 5-phosphate = D-ribulose 5-phosphate. The protein operates within carbohydrate degradation; pentose phosphate pathway; D-ribose 5-phosphate from D-ribulose 5-phosphate (non-oxidative stage): step 1/1. Its function is as follows. Catalyzes the reversible conversion of ribose-5-phosphate to ribulose 5-phosphate. The protein is Ribose-5-phosphate isomerase A of Rhizobium etli (strain CIAT 652).